A 557-amino-acid polypeptide reads, in one-letter code: Hdr-like menaquinol oxidoreductase iron-sulfur subunit (557 aa).

4Fe-4S ferredoxin-type domains are found at residues 86 to 115 and 155 to 184; these read RAFKVFMDICVRCGACADKCHYYIGTGDPK and KEWYYYLLQCSLCRRCSLFCPYGIDTAEVV. The [4Fe-4S] cluster site is built by C95, C98, C101, C105, C164, C167, C170, and C174.

The cofactor is [4Fe-4S] cluster.

It is found in the membrane. In terms of biological role, has menaquinol-oxidizing activity. The HmeC and HmeD subunits may together mediate electron transfer from menaquinol to an unidentified electron acceptor on the cytoplasmic side of the membrane. The sequence is that of Hdr-like menaquinol oxidoreductase iron-sulfur subunit (hmeD) from Archaeoglobus profundus (strain DSM 5631 / JCM 9629 / NBRC 100127 / Av18).